A 483-amino-acid polypeptide reads, in one-letter code: Glutamyl-tRNA(Gln) amidotransferase subunit A (483 aa).

Catalysis depends on charge relay system residues Lys76 and Ser151. The active-site Acyl-ester intermediate is the Ser175.

The protein belongs to the amidase family. GatA subfamily. In terms of assembly, heterotrimer of A, B and C subunits.

It catalyses the reaction L-glutamyl-tRNA(Gln) + L-glutamine + ATP + H2O = L-glutaminyl-tRNA(Gln) + L-glutamate + ADP + phosphate + H(+). Functionally, allows the formation of correctly charged Gln-tRNA(Gln) through the transamidation of misacylated Glu-tRNA(Gln) in organisms which lack glutaminyl-tRNA synthetase. The reaction takes place in the presence of glutamine and ATP through an activated gamma-phospho-Glu-tRNA(Gln). This is Glutamyl-tRNA(Gln) amidotransferase subunit A from Pseudomonas entomophila (strain L48).